The following is a 108-amino-acid chain: UPF0060 membrane protein CJA_3703 (108 aa).

The next 4 helical transmembrane spans lie at 6–26, 31–51, 61–81, and 85–105; these read LLFV…YLWL, SIWL…LLTL, AAYG…VDGV, and AYDW…AMGW.

Belongs to the UPF0060 family.

Its subcellular location is the cell inner membrane. In Cellvibrio japonicus (strain Ueda107) (Pseudomonas fluorescens subsp. cellulosa), this protein is UPF0060 membrane protein CJA_3703.